Reading from the N-terminus, the 213-residue chain is Probable nicotinate-nucleotide adenylyltransferase (213 aa).

A disordered region spans residues 194 to 213; the sequence is RKPNNGEAKDGDVKDEEAVR. Basic and acidic residues predominate over residues 200–213; the sequence is EAKDGDVKDEEAVR.

Belongs to the NadD family.

The enzyme catalyses nicotinate beta-D-ribonucleotide + ATP + H(+) = deamido-NAD(+) + diphosphate. The protein operates within cofactor biosynthesis; NAD(+) biosynthesis; deamido-NAD(+) from nicotinate D-ribonucleotide: step 1/1. Functionally, catalyzes the reversible adenylation of nicotinate mononucleotide (NaMN) to nicotinic acid adenine dinucleotide (NaAD). The protein is Probable nicotinate-nucleotide adenylyltransferase of Mycolicibacterium smegmatis (strain ATCC 700084 / mc(2)155) (Mycobacterium smegmatis).